Here is a 1082-residue protein sequence, read N- to C-terminus: RE1-silencing transcription factor (1082 aa).

An interaction with SIN3A region spans residues 32-117 (DLHELSKAEL…SLELSAVEPQ (86 aa)). Residues 43–57 (APQLIMLANVALTGE) form an interaction with SIN3B region. The segment at 140–413 (PVAEDKCRSS…KSKHPTCPSK (274 aa)) is interaction with ZFP90. The segment at 154-176 (FRCKPCQYEAESEEQFVHHIRIH) adopts a C2H2-type 1 zinc-finger fold. Residues 196–207 (SGSSPAEEGEFS) form a required for binding to the neuron-restrictive silencer element region. 7 C2H2-type zinc fingers span residues 211–235 (IRCD…HHLR), 243–265 (YKCI…LRNH), 271–293 (YTCS…VRTH), 299–321 (YKCE…MRTH), 327–350 (FKCD…RQVH), 356–378 (LNCP…VELH), and 384–407 (FNCP…KSKH). 2 disordered regions span residues 408 to 809 (PTCP…ELSL) and 831 to 1027 (SKLL…KAGL). A compositionally biased stretch (basic and acidic residues) spans 440–475 (EKMENEQTKTKGDVSGKKNEKPVKAVGKDASKEKKP). Residues 477–497 (SSVSVVQVTTRTRKSAVAAET) show a composition bias toward low complexity. Basic residues predominate over residues 581 to 597 (KGTKKTPPKTKTSKKGG). Residues 630-640 (VTGSGSSQTEL) show a composition bias toward polar residues. Composition is skewed to pro residues over residues 684–713 (YPQP…PAPP) and 729–751 (KEPP…PPPM). Basic and acidic residues-rich tracts occupy residues 798–807 (LRKDRAEKEL) and 854–864 (NSREETPKDQE). Over residues 900–909 (RVSSSEQNSA) the composition is skewed to polar residues. S950 carries the phosphoserine modification. Residues 985–1063 (EGIHSHDGSD…HLNRHLVNVY (79 aa)) form an interaction with RCOR1 region. The C2H2-type 9 zinc finger occupies 1036 to 1058 (FVCIFCDRSFRKEKDYSKHLNRH).

As to quaternary structure, isoform 1 and isoform 2 form heterodimers. Isoform 2: Forms homodimers and homooligomers; binds to the neuron-restrictive silencer element (NRSE) as monomer. Interacts with SIN3A, SIN3B and RCOR1. Interacts with CDYL. Interacts with EHMT1 and EHMT2 only in the presence of CDYL. Part of a complex containing at least CDYL, REST, WIZ, SETB1, EHMT1 and EHMT2. Interacts (via zinc-finger DNA-binding domain) with ZFP90 (via N- and C-termini); the interaction inhibits REST repressor activity. Interacts (via C2H2-type zinc finger 5) with PRICKLE1. Interacts with FBXW11 and BTRC. Interacts with USP7. Post-translationally, O-glycosylated. Phosphorylated; phosphorylation is required for ubiquitination. In terms of processing, ubiquitinated; ubiquitination is mediated by BTRC and leads to proteasomal degradation in G2 phase. Ubiquitination increases during neuronal differentiation. Deubiquitinated by USP7; leading to its stabilization and promoting the maintenance of neural progenitor cells. In terms of tissue distribution, expressed in the hippocampus, including quiescent neuronal progenitor (QNP) cells, transient-amplifying progenitor (TAP) cells, neuroblasts and mature neurons (at protein level). Expressed in embryonic stem cells (at protein level). Expressed in many non-neuronal tissues including the heart and liver. Abundantly expressed in osteoblastic lineage cells. Expressed in the spleen, kidney, blood cells, cortex, neocortex and in the utricle, saccule and organ of Corti of the inner ear. Isoform 2: Expressed in the cortex, neocortex and in the utricle, saccule and organ of Corti of the inner ear.

It localises to the nucleus. It is found in the cytoplasm. Functionally, transcriptional repressor which binds neuron-restrictive silencer element (NRSE) and represses neuronal gene transcription in non-neuronal cells. Restricts the expression of neuronal genes by associating with two distinct corepressors, SIN3A and RCOR1, which in turn recruit histone deacetylase to the promoters of REST-regulated genes. Mediates repression by recruiting the BHC complex at RE1/NRSE sites which acts by deacetylating and demethylating specific sites on histones, thereby acting as a chromatin modifier. Transcriptional repression by REST-CDYL via the recruitment of histone methyltransferase EHMT2 may be important in transformation suppression. Represses the expression of SRRM4 in non-neural cells to prevent the activation of neural-specific splicing events and to prevent production of REST isoform 2. Repressor activity may be inhibited by forming heterodimers with isoform 2, thereby preventing binding to NRSE or binding to corepressors and leading to derepression of target genes. Also maintains repression of neuronal genes in neural stem cells, and allows transcription and differentiation into neurons by dissociation from RE1/NRSE sites of target genes. Thereby is involved in maintaining the quiescent state of adult neural stem cells and preventing premature differentiation into mature neurons. Plays a role in the developmental switch in synaptic NMDA receptor composition during postnatal development, by repressing GRIN2B expression and thereby altering NMDA receptor properties from containing primarily GRIN2B to primarily GRIN2A subunits. Acts as a regulator of osteoblast differentiation. Key repressor of gene expression in hypoxia; represses genes in hypoxia by direct binding to an RE1/NRSE site on their promoter regions. May also function in stress resistance in the brain during aging; possibly by regulating expression of genes involved in cell death and in the stress response. Repressor of gene expression in the hippocampus after ischemia by directly binding to RE1/NRSE sites and recruiting SIN3A and RCOR1 to promoters of target genes, thereby promoting changes in chromatin modifications and ischemia-induced cell death. After ischemia, might play a role in repression of miR-132 expression in hippocampal neurons, thereby leading to neuronal cell death. In terms of biological role, binds to the 3' region of the neuron-restrictive silencer element (NRSE), with lower affinity than isoform 1. Exhibits weaker repressor activity compared to isoform 1. May negatively regulate the repressor activity of isoform 1 by binding to isoform 1, thereby preventing its binding to NRSE and leading to derepression of target genes. However, in another study, does not appear to be implicated in repressor activity of a NRSE motif-containing reporter construct nor in inhibitory activity on the isoform 1 transcriptional repressor activity. Post-transcriptional inactivation of REST by SRRM4-dependent alternative splicing into isoform 2 is required in mechanosensory hair cells in the inner ear for derepression of neuronal genes, maintenance of hair cells and hearing. This is RE1-silencing transcription factor (Rest) from Mus musculus (Mouse).